Here is a 158-residue protein sequence, read N- to C-terminus: UPF0225 protein Pfl01_1218 (158 aa).

It belongs to the UPF0225 family.

In Pseudomonas fluorescens (strain Pf0-1), this protein is UPF0225 protein Pfl01_1218.